Consider the following 160-residue polypeptide: MKAVCPGSFDPITLGHLDIVTRAAAQFSEVTILVTANPNKNSGLFTVAERMDLIRESTAHLDNVKVDTWASLLVDYTTEHGIGALVKGLRSSLDYEYELPMAQMNRRLTGVDTFFLLTDEKYGYVSSTLCKEVARFGGDVSGLLPEVVAKAVTEKYSNQH.

Ser-8 serves as a coordination point for substrate. ATP contacts are provided by residues 8–9 (SF) and His-16. Positions 40, 73, and 87 each coordinate substrate. ATP contacts are provided by residues 88–90 (GLR), Glu-98, and 122–128 (YGYVSST).

This sequence belongs to the bacterial CoaD family. Homohexamer. The cofactor is Mg(2+).

The protein localises to the cytoplasm. The catalysed reaction is (R)-4'-phosphopantetheine + ATP + H(+) = 3'-dephospho-CoA + diphosphate. It functions in the pathway cofactor biosynthesis; coenzyme A biosynthesis; CoA from (R)-pantothenate: step 4/5. Reversibly transfers an adenylyl group from ATP to 4'-phosphopantetheine, yielding dephospho-CoA (dPCoA) and pyrophosphate. This chain is Phosphopantetheine adenylyltransferase, found in Corynebacterium glutamicum (strain R).